A 231-amino-acid chain; its full sequence is CD302 antigen (231 aa).

An N-terminal signal peptide occupies residues 1-21 (MSAAVVATLPTLLLLLGLAAA). Residues 22–169 (DCPSSSWVQF…YEKKYLPDHH (148 aa)) are Extracellular-facing. Positions 31–153 (FQSNCYIFLQ…CEVSSVEGAL (123 aa)) constitute a C-type lectin domain. Residue Asn110 is glycosylated (N-linked (GlcNAc...) asparagine). The cysteines at positions 129 and 144 are disulfide-linked. Residues 170-190 (ILITALVIASTTILTITGAVV) form a helical membrane-spanning segment. Residues 191 to 231 (WFLYKRNLTSGLTNTAYTTAPQLPYNDDCILVDAEENEYVA) are Cytoplasmic-facing.

It is found in the membrane. Its subcellular location is the cell projection. It localises to the filopodium. The protein localises to the cytoplasm. The protein resides in the cell cortex. It is found in the microvillus. Its function is as follows. Potential multifunctional C-type lectin receptor that may play roles in endocytosis and phagocytosis as well as in cell adhesion and migration. The sequence is that of CD302 antigen from Trichosurus vulpecula (Brush-tailed possum).